We begin with the raw amino-acid sequence, 1384 residues long: Sterol 3-beta-glucosyltransferase (1384 aa).

Disordered regions lie at residues 1 to 64 (MPNM…DGQL), 86 to 189 (ARFD…TPRA), and 204 to 229 (DKKQSADQPSSSTKGETDGTSEQSCA). The segment covering 7–19 (LLEDAKRRVDRRL) has biased composition (basic and acidic residues). Low complexity predominate over residues 21-36 (ASRQSISSSRIFSSAF). Basic and acidic residues predominate over residues 38–47 (DRLKDDHDAQ). Low complexity predominate over residues 146-156 (LRSLKPSPKSS). Residues 158-172 (GTETTVQTEPPTSDE) are compositionally biased toward polar residues. Positions 174-189 (SPLASPRRARSATPRA) are enriched in low complexity. Positions 209 to 229 (ADQPSSSTKGETDGTSEQSCA) are enriched in polar residues. The GRAM 1 domain occupies 237–284 (KEMFGFEMPEKVLMEYACSLLQNILLQGYMYVTEGHICFYAYLPRKSA). One can recognise a PH domain in the interval 285-384 (VTIRSGYLHK…WVKALQKVIF (100 aa)). 2 disordered regions span residues 457-526 (MKTS…RQRD) and 560-629 (NRSD…VNSS). Polar residues-rich tracts occupy residues 458–473 (KTSQLLPPPSEQTSPA), 483–494 (WSLNSDLSQSRG), and 560–572 (NRSDVFQSPTIHT). Positions 578 to 588 (PSGDRTGRRLS) are enriched in basic and acidic residues. Over residues 604–629 (RNGQEMQYASSDSDQGTQHPSKVNSS) the composition is skewed to polar residues. In terms of domain architecture, GRAM 2 spans 714-817 (RFRAHFALPS…RDDCAVTVHQ (104 aa)). 10 residues coordinate UDP-alpha-D-glucose: Ser-901, Arg-902, Asp-904, Ala-1204, His-1206, His-1219, Gly-1223, Thr-1224, Asp-1243, and Gln-1244. The segment covering 1322 to 1336 (VSSTPFSPTPSAKTT) has biased composition (polar residues). Residues 1322–1350 (VSSTPFSPTPSAKTTAEQEEDDVDDSEEW) are disordered. Over residues 1338–1350 (EQEEDDVDDSEEW) the composition is skewed to acidic residues.

Belongs to the glycosyltransferase 28 family.

It localises to the cytoplasm. Its subcellular location is the preautophagosomal structure membrane. The catalysed reaction is a sterol + UDP-alpha-D-glucose = a sterol 3-beta-D-glucoside + UDP + H(+). The enzyme catalyses ergosterol + UDP-alpha-D-glucose = ergosteryl 3-beta-D-glucoside + UDP + H(+). In terms of biological role, sterol glycosyltransferase responsible for the glycosylation of ergosterol to form ergosterol-glucoside. Involved in cytoplasm to vacuole transport (Cvt), pexophagy or nonselective autophagy. This Aspergillus oryzae (strain ATCC 42149 / RIB 40) (Yellow koji mold) protein is Sterol 3-beta-glucosyltransferase.